We begin with the raw amino-acid sequence, 252 residues long: MSDWNPSLYLHFAAERSRPAVELLARVPLENIEYIADLGCGPGNSTALLDQRWPAARITGIDSSPAMIAEARSALPDCLFVEADIRNWQPEQALDLIFANASLQWLPDHYELFPHLVSLLSPLGVLAVQMPDNWLEPTHVLMREVAWEQNYPDRGREPLAGVHAYYDILSEAGCEVDIWRTTYYHQMPSHQAIIDWVTATGLRPWLQDLTESEQQHFLTRYHQMLEEQYPLQENGQILLAFPRLFIVARRTE.

It belongs to the methyltransferase superfamily. Tam family.

The protein resides in the cytoplasm. It catalyses the reaction trans-aconitate + S-adenosyl-L-methionine = (E)-3-(methoxycarbonyl)pent-2-enedioate + S-adenosyl-L-homocysteine. Catalyzes the S-adenosylmethionine monomethyl esterification of trans-aconitate. The protein is Trans-aconitate 2-methyltransferase of Escherichia coli O6:K15:H31 (strain 536 / UPEC).